A 267-amino-acid chain; its full sequence is MTSFNDGRTVHVVIPARYGSTRLPGKPLVDLEGEPMIVRVHARVRRALPEADIVVAIDDARIAEVLDARGIRFAMTDTGHASGTDRAAEVARVSGWPDTDAVLNVQGDEPLVPTALLQAFAGFCGATAALGVATVACPIGEVALLDEPAIVKVVVDHRGRALYFSRAAIPFCRDGRPADSAGSNGLFLRHIGLYGYTNATLQALSRAAPCELEQLEKLEQLRALWLGMPIDVMRWPDAPPAGIDTPDDVARVVSLLKRQTHDATEPY.

This sequence belongs to the KdsB family.

The protein localises to the cytoplasm. The catalysed reaction is 3-deoxy-alpha-D-manno-oct-2-ulosonate + CTP = CMP-3-deoxy-beta-D-manno-octulosonate + diphosphate. It participates in nucleotide-sugar biosynthesis; CMP-3-deoxy-D-manno-octulosonate biosynthesis; CMP-3-deoxy-D-manno-octulosonate from 3-deoxy-D-manno-octulosonate and CTP: step 1/1. The protein operates within bacterial outer membrane biogenesis; lipopolysaccharide biosynthesis. Functionally, activates KDO (a required 8-carbon sugar) for incorporation into bacterial lipopolysaccharide in Gram-negative bacteria. This is 3-deoxy-manno-octulosonate cytidylyltransferase 2 from Burkholderia ambifaria (strain MC40-6).